A 328-amino-acid polypeptide reads, in one-letter code: Biotin synthase (328 aa).

In terms of domain architecture, Radical SAM core spans Phe53–Arg282. Cys71, Cys75, and Cys78 together coordinate [4Fe-4S] cluster. Positions 115, 147, 207, and 277 each coordinate [2Fe-2S] cluster.

Belongs to the radical SAM superfamily. Biotin synthase family. In terms of assembly, homodimer. [4Fe-4S] cluster serves as cofactor. [2Fe-2S] cluster is required as a cofactor.

The catalysed reaction is (4R,5S)-dethiobiotin + (sulfur carrier)-SH + 2 reduced [2Fe-2S]-[ferredoxin] + 2 S-adenosyl-L-methionine = (sulfur carrier)-H + biotin + 2 5'-deoxyadenosine + 2 L-methionine + 2 oxidized [2Fe-2S]-[ferredoxin]. It participates in cofactor biosynthesis; biotin biosynthesis; biotin from 7,8-diaminononanoate: step 2/2. Functionally, catalyzes the conversion of dethiobiotin (DTB) to biotin by the insertion of a sulfur atom into dethiobiotin via a radical-based mechanism. The chain is Biotin synthase from Desulforudis audaxviator (strain MP104C).